The chain runs to 699 residues: tRNA wybutosine-synthesizing protein 4 (699 aa).

S-adenosyl-L-methionine is bound by residues Arg94, Gly120, Asp151, Asp197–Leu198, and Glu224.

The protein belongs to the methyltransferase superfamily. LCMT family.

The enzyme catalyses 7-[(3S)-3-amino-3-carboxypropyl]wyosine(37) in tRNA(Phe) + S-adenosyl-L-methionine = 7-[(3S)-(3-amino-3-methoxycarbonyl)propyl]wyosine(37) in tRNA(Phe) + S-adenosyl-L-homocysteine. The catalysed reaction is 7-[(3S)-(3-amino-3-methoxycarbonyl)propyl]wyosine(37) in tRNA(Phe) + S-adenosyl-L-methionine + CO2 = wybutosine(37) in tRNA(Phe) + S-adenosyl-L-homocysteine + 2 H(+). Its pathway is tRNA modification; wybutosine-tRNA(Phe) biosynthesis. Probable S-adenosyl-L-methionine-dependent methyltransferase that acts as a component of the wybutosine biosynthesis pathway. Wybutosine is a hyper modified guanosine with a tricyclic base found at the 3'-position adjacent to the anticodon of eukaryotic phenylalanine tRNA. May methylate the carboxyl group of leucine residues to form alpha-leucine ester residues. This is tRNA wybutosine-synthesizing protein 4 (PPM2) from Eremothecium gossypii (strain ATCC 10895 / CBS 109.51 / FGSC 9923 / NRRL Y-1056) (Yeast).